Reading from the N-terminus, the 579-residue chain is Amino acid transporter 1 (579 aa).

At 1–83 (MSAKDYDFDI…KRGLSTRHMQ (83 aa)) the chain is on the cytoplasmic side. Residues 84 to 104 (LMSIGGAIGSGLYVGSGSALA) traverse the membrane as a helical segment. Topologically, residues 105-108 (DGGP) are extracellular. A helical transmembrane segment spans residues 109 to 129 (ASVIINYILIGIMMFFVIYAL). Residues 130 to 161 (GEMAVAYPVAGSFNTYATRFIDPAWGFAVSWN) are Cytoplasmic-facing. The chain crosses the membrane as a helical span at residues 162–184 (YFFNYFVTFPFELTTCAITFTFW). Topologically, residues 185-186 (TD) are extracellular. The helical transmembrane segment at 187–207 (VNCAVWISIFLVVVIGINLFG) threads the bilayer. Over 208-215 (VRVFGEVE) the chain is Cytoplasmic. The chain crosses the membrane as a helical span at residues 216–236 (FVLALIKVVATVGFIILAIII). At 237-265 (NCGGVPTDHRGYIGGSIIKQKPFRHGFKG) the chain is on the extracellular side. A helical transmembrane segment spans residues 266-286 (FCSVYTTAAFSFSGTEIVGLA). The Cytoplasmic portion of the chain corresponds to 287-303 (AAEVGDPRKTLPGAVKQ). Residues 304–324 (VFWRVAIFYIVSLILIGLLIS) traverse the membrane as a helical segment. Topologically, residues 325-347 (PDDPKLMGNGSASVSPFVLAIQE) are extracellular. Residues 348 to 368 (ANIKGLPSVFNAVIIISVISV) form a helical membrane-spanning segment. At 369 to 401 (TNSSTYTAGRTLHGMANLKQAPAFFKYTDRLGR) the chain is on the cytoplasmic side. The helical transmembrane segment at 402–422 (PLIAMIVVLSFGFFAYINEAN) threads the bilayer. Residues 423-431 (NNGNDISDT) are Extracellular-facing. A helical transmembrane segment spans residues 432–452 (VFDWLLAISGLSNFFTWGSIC). The Cytoplasmic segment spans residues 453 to 471 (LSHIMFRLAFKKQGHSLKE). The chain crosses the membrane as a helical span at residues 472 to 492 (LGFVSPMGIWGSVIGLGFNIL). The Extracellular segment spans residues 493–513 (CLMAEFYVSLFPIGGSPNAND). Residues 514 to 534 (FFQGYLAACITLVFFIGYKIY) traverse the membrane as a helical segment. Over 535–579 (DRSHIPSLDKLDITTGLKTYEYEETKDSSDTGRFRFFKKIINTVC) the chain is Cytoplasmic.

Belongs to the amino acid-polyamine-organocation (APC) superfamily.

It is found in the golgi apparatus membrane. The protein localises to the cell membrane. Its function is as follows. Probable amino acid transporter that may play a role in function in microtubule organization since it causes microtubule defects when overexpressed. The chain is Amino acid transporter 1 (aat1) from Schizosaccharomyces pombe (strain 972 / ATCC 24843) (Fission yeast).